Consider the following 105-residue polypeptide: Heat shock protein HspQ (105 aa).

The interval 80-105 is disordered; it reads AHPEQPSLDELAASIRHQLQAPHLRN.

This sequence belongs to the HspQ family.

The protein localises to the cytoplasm. Involved in the degradation of certain denaturated proteins, including DnaA, during heat shock stress. This Yersinia pseudotuberculosis serotype O:1b (strain IP 31758) protein is Heat shock protein HspQ.